A 364-amino-acid chain; its full sequence is Protein FAM81A (364 aa).

Residues 80–107 (IRNITAIVKQLNRDIEVLQEQIRARDNI) are a coiled coil. Residues 275 to 300 (ARLDKIEESQRRNAEGQRKPEEEKVH) are compositionally biased toward basic and acidic residues. The interval 275 to 301 (ARLDKIEESQRRNAEGQRKPEEEKVHG) is disordered.

The protein belongs to the FAM81 family. In terms of assembly, interacts with DLG4/PSD-95, GRIN2B/GLUN2B and SYNGAP1; the interactions facilitate condensate formation. In terms of tissue distribution, highly expressed in brain (at protein level).

It localises to the postsynaptic density. It is found in the cytoplasm. In terms of biological role, facilitates the interaction and assembly of proteins within the postsynaptic density by promoting the condensation of postsynaptic proteins via liquid-liquid phase separation. Required for neuronal activity. Accumulation at the postsynaptic density results in enlargement of dendritic spines. The chain is Protein FAM81A from Rattus norvegicus (Rat).